The chain runs to 303 residues: Recombination-associated protein RdgC (303 aa).

It belongs to the RdgC family.

It is found in the cytoplasm. It localises to the nucleoid. May be involved in recombination. The chain is Recombination-associated protein RdgC from Pseudoalteromonas translucida (strain TAC 125).